The chain runs to 259 residues: Thrombin-like enzyme gyroxin B1.7 (259 aa).

Residues 1–18 form the signal peptide; sequence MVLIRVLANLLILQLSYA. The propeptide occupies 19-259; it reads QKSSELVIGG…AGNTAVTCPP (241 aa). One can recognise a Peptidase S1 domain in the interval 25 to 250; that stretch reads VIGGDECNIN…DTEWIQSIIA (226 aa). 5 disulfide bridges follow: Cys-31–Cys-162, Cys-49–Cys-65, Cys-141–Cys-211, Cys-173–Cys-190, and Cys-201–Cys-226. The Charge relay system role is filled by His-64. The N-linked (GlcNAc...) asparagine glycan is linked to Asn-102. The active-site Charge relay system is Asp-109. Ser-205 serves as the catalytic Charge relay system.

It belongs to the peptidase S1 family. Snake venom subfamily. Monomer. In terms of tissue distribution, expressed by the venom gland.

It localises to the secreted. Its function is as follows. Thrombin-like snake venom serine protease. Displays a specificity similar to trypsin. Releases only fibrinopeptide A in the conversion of fibrinogen to fibrin. Shows coagulant, esterase and amidase activities. Reversibly increases the permeability of the blood brain barrier (BBB) in mice. Induces the barrel rotation syndrome in mice, which is manifested by gyroxin-like, rapid rolling motions. This syndrome may be due to its effect on BBB permeability, and certainly also to other actions affecting endogenous substrates present in the endothelium, nervous tissues or blood. The protein is Thrombin-like enzyme gyroxin B1.7 of Crotalus durissus terrificus (South American rattlesnake).